A 326-amino-acid chain; its full sequence is Beta-ketoacyl-[acyl-carrier-protein] synthase III (326 aa).

Residues C112 and H251 contribute to the active site. An ACP-binding region spans residues 252–256 (QANSR). N281 is a catalytic residue.

It belongs to the thiolase-like superfamily. FabH family. In terms of assembly, homodimer.

The protein resides in the cytoplasm. The catalysed reaction is malonyl-[ACP] + acetyl-CoA + H(+) = 3-oxobutanoyl-[ACP] + CO2 + CoA. It participates in lipid metabolism; fatty acid biosynthesis. Functionally, catalyzes the condensation reaction of fatty acid synthesis by the addition to an acyl acceptor of two carbons from malonyl-ACP. Catalyzes the first condensation reaction which initiates fatty acid synthesis and may therefore play a role in governing the total rate of fatty acid production. Possesses both acetoacetyl-ACP synthase and acetyl transacylase activities. Its substrate specificity determines the biosynthesis of branched-chain and/or straight-chain of fatty acids. The polypeptide is Beta-ketoacyl-[acyl-carrier-protein] synthase III (Clostridium botulinum (strain Kyoto / Type A2)).